The chain runs to 248 residues: MGYNKSLRYSRHEGTTCVIDNHHLKSLGSVLNDVRRKKDRIREAEYEPILDIADQYMVTEDPFRGPGKNVRITLFKEIRRVHPDTMKLVCNWSGKEFLRETWTRFISEEFPITTDQEIMDLWFEIQLRPMHPNRCYKFTMQYALGAHPDYVAHDVIRQHDPYYVGPNNIERINLSKKGFAFPLTCLQSVYNDNFERFFDDVLWPYFHRPLVYIGTTSAEVEEIMIEVSLLFKIKEFAPDVPLFTGPAY.

The protein belongs to the polyhedrin family.

Its function is as follows. Component of the virus occlusion bodies, which are large proteinaceous structures, that protect the virus from the outside environment for extended periods until they are ingested by insect larvae. This is Granulin from Adoxophyes orana granulovirus (AoGV).